A 607-amino-acid chain; its full sequence is Polyadenylate-binding protein 1-like (607 aa).

RRM domains lie at 11–89 (SSLY…WSHR), 99–175 (GNIF…HFKS), 191–268 (TNIY…RAQK), and 294–370 (VNLY…LAQR). One can recognise a PABC domain in the interval 523-600 (HQPLTVSMLA…AVAVLQVHRE (78 aa)).

The protein belongs to the polyadenylate-binding protein type-1 family. As to expression, expressed in ovary and testis.

The protein localises to the cytoplasm. Poly(A)-binding protein involved in oocyte maturation and early embryo development. It is required for cytosolic mRNA polyadenylation and translational activation of maternally stored mRNA in oocytes. The chain is Polyadenylate-binding protein 1-like from Mus musculus (Mouse).